A 129-amino-acid chain; its full sequence is Large ribosomal subunit protein bL12c (129 aa).

This sequence belongs to the bacterial ribosomal protein bL12 family. As to quaternary structure, homodimer. Part of the ribosomal stalk of the 50S ribosomal subunit. Forms a multimeric L10(L12)X complex, where L10 forms an elongated spine to which 2 to 4 L12 dimers bind in a sequential fashion. Binds GTP-bound translation factors.

The protein localises to the plastid. The protein resides in the chloroplast. Its function is as follows. Forms part of the ribosomal stalk which helps the ribosome interact with GTP-bound translation factors. Is thus essential for accurate translation. The protein is Large ribosomal subunit protein bL12c of Porphyra purpurea (Red seaweed).